Here is a 631-residue protein sequence, read N- to C-terminus: 1-deoxy-D-xylulose-5-phosphate synthase (631 aa).

Residues H76 and 117 to 119 (AHS) contribute to the thiamine diphosphate site. D148 contacts Mg(2+). Residues 149–150 (GA), N177, Y284, and E365 contribute to the thiamine diphosphate site. Position 177 (N177) interacts with Mg(2+).

The protein belongs to the transketolase family. DXPS subfamily. In terms of assembly, homodimer. Requires Mg(2+) as cofactor. Thiamine diphosphate serves as cofactor.

The enzyme catalyses D-glyceraldehyde 3-phosphate + pyruvate + H(+) = 1-deoxy-D-xylulose 5-phosphate + CO2. The protein operates within metabolic intermediate biosynthesis; 1-deoxy-D-xylulose 5-phosphate biosynthesis; 1-deoxy-D-xylulose 5-phosphate from D-glyceraldehyde 3-phosphate and pyruvate: step 1/1. Its function is as follows. Catalyzes the acyloin condensation reaction between C atoms 2 and 3 of pyruvate and glyceraldehyde 3-phosphate to yield 1-deoxy-D-xylulose-5-phosphate (DXP). The sequence is that of 1-deoxy-D-xylulose-5-phosphate synthase from Methylibium petroleiphilum (strain ATCC BAA-1232 / LMG 22953 / PM1).